The chain runs to 3681 residues: E3 ubiquitin-protein ligase UPL1 (3681 aa).

The span at Asp882–Ser891 shows a compositional bias: basic and acidic residues. The interval Asp882 to Asn912 is disordered. The segment covering Asp892–Thr901 has biased composition (low complexity). Residues Gln1269 to Asn1310 enclose the UBA domain. The region spanning Gln1316–Thr1335 is the UIM domain. Disordered stretches follow at residues Ser1332–Pro1358, Met1768–Ile1802, Glu2015–Glu2094, Glu2125–Asp2151, Arg2253–Val2287, Asn2401–Glu2435, Pro2483–Pro2505, Ile2537–Val2606, Ser2975–Ser3003, and Thr3228–Gly3254. Basic and acidic residues-rich tracts occupy residues Pro1336–Val1345, Lys1782–Ile1802, and Leu2017–His2037. The span at Gly2038–Met2087 shows a compositional bias: polar residues. Positions Asp2130–Asp2151 are enriched in acidic residues. A compositionally biased stretch (basic and acidic residues) spans Arg2253–Ser2265. Polar residues predominate over residues Arg2277–Val2287. Ser2598 carries the phosphoserine modification. Positions Glu2982 to Glu3002 are enriched in basic and acidic residues. Over residues Ala3237 to Asp3247 the composition is skewed to polar residues. The HECT domain maps to Ser3340–Ala3681. The Glycyl thioester intermediate role is filled by Cys3648.

It belongs to the UPL family. TOM1/PTR1 subfamily. Widely expressed. Expressed in root, stem, cauline and rosette leaf, seedling and flower (at protein level).

It carries out the reaction S-ubiquitinyl-[E2 ubiquitin-conjugating enzyme]-L-cysteine + [acceptor protein]-L-lysine = [E2 ubiquitin-conjugating enzyme]-L-cysteine + N(6)-ubiquitinyl-[acceptor protein]-L-lysine.. It functions in the pathway protein modification; protein ubiquitination. Probable E3 ubiquitin-protein ligase which mediates ubiquitination and subsequent proteasomal degradation of target proteins. The protein is E3 ubiquitin-protein ligase UPL1 (UPL1) of Arabidopsis thaliana (Mouse-ear cress).